The primary structure comprises 330 residues: Glycerol-3-phosphate dehydrogenase [NAD(P)+] (330 aa).

The NADPH site is built by tryptophan 11, arginine 33, and lysine 105. Sn-glycerol 3-phosphate is bound by residues lysine 105, glycine 133, and serine 135. NADPH is bound at residue alanine 137. Sn-glycerol 3-phosphate-binding residues include lysine 188, aspartate 241, serine 251, arginine 252, and asparagine 253. The Proton acceptor role is filled by lysine 188. Arginine 252 lines the NADPH pocket. Residues valine 276 and glutamate 278 each coordinate NADPH.

This sequence belongs to the NAD-dependent glycerol-3-phosphate dehydrogenase family.

It is found in the cytoplasm. It carries out the reaction sn-glycerol 3-phosphate + NAD(+) = dihydroxyacetone phosphate + NADH + H(+). The catalysed reaction is sn-glycerol 3-phosphate + NADP(+) = dihydroxyacetone phosphate + NADPH + H(+). Its pathway is membrane lipid metabolism; glycerophospholipid metabolism. In terms of biological role, catalyzes the reduction of the glycolytic intermediate dihydroxyacetone phosphate (DHAP) to sn-glycerol 3-phosphate (G3P), the key precursor for phospholipid synthesis. This is Glycerol-3-phosphate dehydrogenase [NAD(P)+] from Acidovorax ebreus (strain TPSY) (Diaphorobacter sp. (strain TPSY)).